Reading from the N-terminus, the 132-residue chain is 3-aminoacrylate deaminase RutC (132 aa).

The protein belongs to the RutC family.

It carries out the reaction (Z)-3-aminoacrylate + H2O + H(+) = 3-oxopropanoate + NH4(+). In terms of biological role, involved in pyrimidine catabolism. Catalyzes the deamination of 3-aminoacrylate to malonic semialdehyde, a reaction that can also occur spontaneously. RutC may facilitate the reaction and modulate the metabolic fitness, rather than catalyzing essential functions. The chain is 3-aminoacrylate deaminase RutC from Cronobacter sakazakii (strain ATCC BAA-894) (Enterobacter sakazakii).